The sequence spans 235 residues: High mobility group protein 1.2 (235 aa).

Positions 1 to 34 (MNSGYSANIFPSSSSPTLYQSHQLQPNPSATMYQ) are enriched in polar residues. The tract at residues 1-47 (MNSGYSANIFPSSSSPTLYQSHQLQPNPSATMYQATPRDMGKPPVRG) is disordered. 2 consecutive DNA-binding regions (HMG box) follow at residues 47–117 (GKTS…AAYG) and 135–203 (PKRA…RNYK).

This sequence belongs to the HMGB family.

It is found in the nucleus. The chain is High mobility group protein 1.2 (hmg-1.2) from Caenorhabditis elegans.